A 368-amino-acid polypeptide reads, in one-letter code: DNA replication and repair protein RecF (368 aa).

Residue 30–37 (GDNGAGKT) coordinates ATP.

Belongs to the RecF family.

The protein localises to the cytoplasm. Functionally, the RecF protein is involved in DNA metabolism; it is required for DNA replication and normal SOS inducibility. RecF binds preferentially to single-stranded, linear DNA. It also seems to bind ATP. The protein is DNA replication and repair protein RecF of Xanthomonas euvesicatoria pv. vesicatoria (strain 85-10) (Xanthomonas campestris pv. vesicatoria).